A 277-amino-acid chain; its full sequence is Large ribosomal subunit protein uL2 (277 aa).

A disordered region spans residues 199–277 (DHGNINDGKA…ILRSRHQRKS (79 aa)).

Belongs to the universal ribosomal protein uL2 family. As to quaternary structure, part of the 50S ribosomal subunit. Forms a bridge to the 30S subunit in the 70S ribosome.

Functionally, one of the primary rRNA binding proteins. Required for association of the 30S and 50S subunits to form the 70S ribosome, for tRNA binding and peptide bond formation. It has been suggested to have peptidyltransferase activity; this is somewhat controversial. Makes several contacts with the 16S rRNA in the 70S ribosome. This is Large ribosomal subunit protein uL2 from Mesorhizobium japonicum (strain LMG 29417 / CECT 9101 / MAFF 303099) (Mesorhizobium loti (strain MAFF 303099)).